Here is a 560-residue protein sequence, read N- to C-terminus: Arginine--tRNA ligase (560 aa).

A 'HIGH' region motif is present at residues 122–132 (ANPNGPLHIGH).

This sequence belongs to the class-I aminoacyl-tRNA synthetase family.

It is found in the cytoplasm. It catalyses the reaction tRNA(Arg) + L-arginine + ATP = L-arginyl-tRNA(Arg) + AMP + diphosphate. The protein is Arginine--tRNA ligase (argS) of Methanothermobacter thermautotrophicus (strain ATCC 29096 / DSM 1053 / JCM 10044 / NBRC 100330 / Delta H) (Methanobacterium thermoautotrophicum).